Reading from the N-terminus, the 231-residue chain is Acyl-protein thioesterase 2 (231 aa).

Cys-2 carries S-palmitoyl cysteine lipidation. The residue at position 82 (Ser-82) is a Phosphoserine. Active-site charge relay system residues include Ser-122, Asp-176, and His-210.

It belongs to the AB hydrolase superfamily. AB hydrolase 2 family. In terms of tissue distribution, expressed in various breast cancer cell lines.

It is found in the cytoplasm. The catalysed reaction is S-hexadecanoyl-L-cysteinyl-[protein] + H2O = L-cysteinyl-[protein] + hexadecanoate + H(+). It catalyses the reaction prostaglandin E2 1-glyceryl ester + H2O = prostaglandin E2 + glycerol + H(+). The enzyme catalyses 1-hexadecanoyl-sn-glycero-3-phosphocholine + H2O = sn-glycerol 3-phosphocholine + hexadecanoate + H(+). It carries out the reaction 1-octadecanoyl-sn-glycero-3-phosphocholine + H2O = octadecanoate + sn-glycerol 3-phosphocholine + H(+). The catalysed reaction is 1-hexadecanoyl-sn-glycero-3-phosphate + H2O = sn-glycerol 3-phosphate + hexadecanoate + H(+). It catalyses the reaction 1-hexadecanoyl-sn-glycero-3-phospho-L-serine + H2O = sn-glycero-3-phospho-L-serine + hexadecanoate + H(+). Its activity is regulated as follows. Inhibited by compound 1 or (5,5-Dioxido-4H-thieno[3,2-c]thiochromen-2-yl)(4-(4-methoxyphenyl)piperazin-1-yl)methanone. Acts as an acyl-protein thioesterase hydrolyzing fatty acids from S-acylated cysteine residues in proteins such as trimeric G alpha proteins, GSDMD, GAP43, ZDHHC6 or HRAS. Deacylates GAP43. Mediates depalmitoylation of ZDHHC6. Has lysophospholipase activity. Hydrolyzes prostaglandin glycerol esters (PG-Gs) in the following order prostaglandin D2-glycerol ester (PGD2-G) &gt; prostaglandin E2 glycerol ester (PGE2-G) &gt; prostaglandin F2-alpha-glycerol ester (PGF2-alpha-G). Hydrolyzes 1-arachidonoylglycerol but not 2-arachidonoylglycerol or arachidonoylethanolamide. The protein is Acyl-protein thioesterase 2 (LYPLA2) of Homo sapiens (Human).